A 65-amino-acid polypeptide reads, in one-letter code: Large ribosomal subunit protein bL35 (65 aa).

The protein belongs to the bacterial ribosomal protein bL35 family.

The protein is Large ribosomal subunit protein bL35 of Nitrosomonas europaea (strain ATCC 19718 / CIP 103999 / KCTC 2705 / NBRC 14298).